The following is a 360-amino-acid chain: Hydroxyproline O-arabinosyltransferase RDN2 (360 aa).

Residues 13–33 (VLGSSFATYNLVTMIIHYGSA) traverse the membrane as a helical; Signal-anchor segment.

It is found in the golgi apparatus membrane. The catalysed reaction is trans-4-hydroxy-L-prolyl-[protein] + UDP-beta-L-arabinofuranose = O-(beta-L-arabinofuranosyl)-trans-4-hydroxy-L-prolyl-[protein] + UDP + H(+). Its function is as follows. Glycosyltransferase involved in the O-arabinosylation of several proteins including extensins and small signaling peptides. Catalyzes the transfer of the initial L-arabinose to the hydroxyl group of Hyp residues. Probably involved in the arabinosylation of CLAVATA3/ESR-related (CLE) signaling peptides that move from root to shoot, to interact with SUNN receptor kinase signaling that regulates nodulation. Involved in long distance nodulation signaling events. Involved in the autoregulation of nodulation (AON), a long distance systemic signaling from root to shoot and back again, which allows legumes to limit the number of root nodules formed based on available nitrogen and previous rhizobial colonization. Functions in the root, upstream of the shoot receptor kinase SUNN and via CLE peptide, to control AON. This is Hydroxyproline O-arabinosyltransferase RDN2 from Medicago truncatula (Barrel medic).